A 181-amino-acid chain; its full sequence is Large ribosomal subunit protein uL10 (181 aa).

This sequence belongs to the universal ribosomal protein uL10 family. As to quaternary structure, part of the ribosomal stalk of the 50S ribosomal subunit. The N-terminus interacts with L11 and the large rRNA to form the base of the stalk. The C-terminus forms an elongated spine to which L12 dimers bind in a sequential fashion forming a multimeric L10(L12)X complex.

Its function is as follows. Forms part of the ribosomal stalk, playing a central role in the interaction of the ribosome with GTP-bound translation factors. The polypeptide is Large ribosomal subunit protein uL10 (Fervidobacterium nodosum (strain ATCC 35602 / DSM 5306 / Rt17-B1)).